Here is a 311-residue protein sequence, read N- to C-terminus: UDP-N-acetylenolpyruvoylglucosamine reductase (311 aa).

The FAD-binding PCMH-type domain maps to 28-197 (KIGGNARWLV…VSARFHLARG (170 aa)). Arg-177 is an active-site residue. The active-site Proton donor is Ser-226. Glu-296 is a catalytic residue.

The protein belongs to the MurB family. It depends on FAD as a cofactor.

Its subcellular location is the cytoplasm. The enzyme catalyses UDP-N-acetyl-alpha-D-muramate + NADP(+) = UDP-N-acetyl-3-O-(1-carboxyvinyl)-alpha-D-glucosamine + NADPH + H(+). It participates in cell wall biogenesis; peptidoglycan biosynthesis. Cell wall formation. This chain is UDP-N-acetylenolpyruvoylglucosamine reductase, found in Magnetococcus marinus (strain ATCC BAA-1437 / JCM 17883 / MC-1).